A 694-amino-acid polypeptide reads, in one-letter code: MADSYDLTAIRNIGIMAHIDAGKTTTTERILFYSGRVHKMGEVDKGTATMDWMSQEQERGITITSAATACKWKGYFVNIIDTPGHVDFTVEVERSLRVLDGSIGIFCAVAGVQPQSETVWRQADRYHVPRIAYINKMDRVGADFFRVIEMIRKNLSSDAVAIQLPIGVEEAFSGIIDLIDFKAYIYEDESGEQYQERELNPDERSKAQEFRNLLLERLAEYDDSILEKYLEAREISPAEIRSSLRKSCISNQIVPVLCGSSFKNKGVQMLLDAVVSYLPSPLDIPAIEAMDIASGENVRIKPEVDAPLCALAFKLASDPYVGKLTYFRIYSGRIKAGSTLFNSRQDRKERFTRLLKMHANHREEIEEACAGDIVAGVGLKNTATGDTLCSENHLVLLETIDFPQPVIDVAIEAKTRADQERIEESLRRLAEEDPTFQTRQDKESGQMIISGMGELHLEIIIDRLLKEFKVNANIGKPQVAYKESVKKRTAAEVKFDRQAGGRGQYAHVVLEVLPLAEGQGKRFADKSSPEAIPREFIPAVEMGVREALQAGILGGYPVDDVEVVLKGGSYHEVDSNEPAFKIAASMALKEALENAQSVFLEPVMDLEIICPEEYLGDVISDLNARRGRIIALEENRDTKAVKGLVPLAETFGYATSLRSLTQGRASFSMKIKNFAEVPESKSREIIARRYGLPV.

The 275-residue stretch at 8 to 282 folds into the tr-type G domain; the sequence is TAIRNIGIMA…AVVSYLPSPL (275 aa). GTP is bound by residues 17–24, 81–85, and 135–138; these read AHIDAGKT, DTPGH, and NKMD.

This sequence belongs to the TRAFAC class translation factor GTPase superfamily. Classic translation factor GTPase family. EF-G/EF-2 subfamily.

It is found in the cytoplasm. In terms of biological role, catalyzes the GTP-dependent ribosomal translocation step during translation elongation. During this step, the ribosome changes from the pre-translocational (PRE) to the post-translocational (POST) state as the newly formed A-site-bound peptidyl-tRNA and P-site-bound deacylated tRNA move to the P and E sites, respectively. Catalyzes the coordinated movement of the two tRNA molecules, the mRNA and conformational changes in the ribosome. The polypeptide is Elongation factor G 2 (Syntrophomonas wolfei subsp. wolfei (strain DSM 2245B / Goettingen)).